A 258-amino-acid polypeptide reads, in one-letter code: Thiazole synthase (258 aa).

Lys100 (schiff-base intermediate with DXP) is an active-site residue. Residues Gly161, Ala187 to Gly188, and Asn209 to Thr210 contribute to the 1-deoxy-D-xylulose 5-phosphate site.

The protein belongs to the ThiG family. Homotetramer. Forms heterodimers with either ThiH or ThiS.

It is found in the cytoplasm. The catalysed reaction is [ThiS sulfur-carrier protein]-C-terminal-Gly-aminoethanethioate + 2-iminoacetate + 1-deoxy-D-xylulose 5-phosphate = [ThiS sulfur-carrier protein]-C-terminal Gly-Gly + 2-[(2R,5Z)-2-carboxy-4-methylthiazol-5(2H)-ylidene]ethyl phosphate + 2 H2O + H(+). It functions in the pathway cofactor biosynthesis; thiamine diphosphate biosynthesis. Functionally, catalyzes the rearrangement of 1-deoxy-D-xylulose 5-phosphate (DXP) to produce the thiazole phosphate moiety of thiamine. Sulfur is provided by the thiocarboxylate moiety of the carrier protein ThiS. In vitro, sulfur can be provided by H(2)S. In Campylobacter jejuni subsp. jejuni serotype O:6 (strain 81116 / NCTC 11828), this protein is Thiazole synthase.